Consider the following 452-residue polypeptide: Neuromedin-K receptor (452 aa).

Residues 1–71 (MASVPRGENW…TNQFVQPSWR (71 aa)) lie on the Extracellular side of the membrane. N-linked (GlcNAc...) asparagine glycans are attached at residues asparagine 9, asparagine 23, asparagine 40, and asparagine 60. The helical transmembrane segment at 72–94 (IALWSLAYGLVVAVAVFGNLIVI) threads the bilayer. At 95-104 (WIILAHKRMR) the chain is on the cytoplasmic side. Residues 105–126 (TVTNYFLVNLAFSDASVAAFNT) form a helical membrane-spanning segment. The Extracellular portion of the chain corresponds to 127–146 (LINFIYGLHSEWYFGANYCR). Residues cysteine 145 and cysteine 220 are joined by a disulfide bond. A helical transmembrane segment spans residues 147–168 (FQNFFPITAVFASIYSMTAIAV). The Cytoplasmic portion of the chain corresponds to 169–188 (DRYMAIIDPLKPRLSATATK). The chain crosses the membrane as a helical span at residues 189–209 (IVIGSIWILAFLLAFPQCLYS). The Extracellular portion of the chain corresponds to 210-232 (KIKVMPGRTLCYVQWPEGPKQHF). A helical transmembrane segment spans residues 233-257 (TYHIIVIILVYCFPLLIMGVTYTIV). Over 258 to 286 (GITLWGGEIPGDTCDKYHEQLKAKRKVVK) the chain is Cytoplasmic. The helical transmembrane segment at 287 to 308 (MMIIVVVTFAICWLPYHVYFIL) threads the bilayer. The Extracellular segment spans residues 309-321 (TAIYQQLNRWKYI). The helical transmembrane segment at 322–346 (QQVYLASFWLAMSSTMYNPIIYCCL) threads the bilayer. At 347 to 452 (NKRFRAGFKR…SPYTSVDEYS (106 aa)) the chain is on the cytoplasmic side. A lipid anchor (S-palmitoyl cysteine) is attached at cysteine 361. The tract at residues 400–452 (FDPNDGDPTKSSRKKRAVPRDPSANGCSHRGSKSASTTSSFISSPYTSVDEYS) is disordered. Over residues 432-452 (KSASTTSSFISSPYTSVDEYS) the composition is skewed to low complexity.

It belongs to the G-protein coupled receptor 1 family. Post-translationally, the anchoring of this receptor to the plasma membrane is probably mediated by the palmitoylation of a cysteine residue.

It is found in the cell membrane. Functionally, this is a receptor for the tachykinin neuropeptide neuromedin-K (neurokinin B). It is associated with G proteins that activate a phosphatidylinositol-calcium second messenger system. The rank order of affinity of this receptor to tachykinins is: neuromedin-K &gt; substance K &gt; substance P. The sequence is that of Neuromedin-K receptor (Tacr3) from Rattus norvegicus (Rat).